Consider the following 390-residue polypeptide: Malonyl-CoA-acyl carrier protein transacylase, mitochondrial (390 aa).

The N-terminal 21 residues, 1 to 21, are a transit peptide targeting the mitochondrion; the sequence is MSVRVARVAWVRGLGASYRRG. Catalysis depends on residues Ser-153 and His-270. Lys-314 bears the N6-succinyllysine mark.

This sequence belongs to the type II malonyltransferase family.

The protein localises to the mitochondrion. It carries out the reaction holo-[ACP] + malonyl-CoA = malonyl-[ACP] + CoA. The protein operates within lipid metabolism; fatty acid biosynthesis. Functionally, catalyzes the transfer of a malonyl moiety from malonyl-CoA to the free thiol group of the phosphopantetheine arm of the mitochondrial ACP protein (NDUFAB1). This suggests the existence of the biosynthesis of fatty acids in mitochondria. Also acts as a mitochondrial small ribosomal subunit (mt-SSU) assembly factor. In Homo sapiens (Human), this protein is Malonyl-CoA-acyl carrier protein transacylase, mitochondrial.